A 500-amino-acid chain; its full sequence is Aspartyl/glutamyl-tRNA(Asn/Gln) amidotransferase subunit B (500 aa).

This sequence belongs to the GatB/GatE family. GatB subfamily. In terms of assembly, heterotrimer of A, B and C subunits.

The enzyme catalyses L-glutamyl-tRNA(Gln) + L-glutamine + ATP + H2O = L-glutaminyl-tRNA(Gln) + L-glutamate + ADP + phosphate + H(+). It carries out the reaction L-aspartyl-tRNA(Asn) + L-glutamine + ATP + H2O = L-asparaginyl-tRNA(Asn) + L-glutamate + ADP + phosphate + 2 H(+). Its function is as follows. Allows the formation of correctly charged Asn-tRNA(Asn) or Gln-tRNA(Gln) through the transamidation of misacylated Asp-tRNA(Asn) or Glu-tRNA(Gln) in organisms which lack either or both of asparaginyl-tRNA or glutaminyl-tRNA synthetases. The reaction takes place in the presence of glutamine and ATP through an activated phospho-Asp-tRNA(Asn) or phospho-Glu-tRNA(Gln). In Thermosynechococcus vestitus (strain NIES-2133 / IAM M-273 / BP-1), this protein is Aspartyl/glutamyl-tRNA(Asn/Gln) amidotransferase subunit B.